Consider the following 197-residue polypeptide: Holliday junction branch migration complex subunit RuvA (197 aa).

The tract at residues 1–64 (MIASIRGILI…EDSLTLYGFE (64 aa)) is domain I. The domain II stretch occupies residues 65 to 145 (TVEQRQLFET…GLPTGAAVTP (81 aa)). Residues 146–148 (AVA) form a flexible linker region. Residues 148 to 197 (AAANAELSEALISLGFTDAEAAAAIAALPSDAPPDLEERVRLALRYFSAS) are domain III.

This sequence belongs to the RuvA family. In terms of assembly, homotetramer. Forms an RuvA(8)-RuvB(12)-Holliday junction (HJ) complex. HJ DNA is sandwiched between 2 RuvA tetramers; dsDNA enters through RuvA and exits via RuvB. An RuvB hexamer assembles on each DNA strand where it exits the tetramer. Each RuvB hexamer is contacted by two RuvA subunits (via domain III) on 2 adjacent RuvB subunits; this complex drives branch migration. In the full resolvosome a probable DNA-RuvA(4)-RuvB(12)-RuvC(2) complex forms which resolves the HJ.

It localises to the cytoplasm. In terms of biological role, the RuvA-RuvB-RuvC complex processes Holliday junction (HJ) DNA during genetic recombination and DNA repair, while the RuvA-RuvB complex plays an important role in the rescue of blocked DNA replication forks via replication fork reversal (RFR). RuvA specifically binds to HJ cruciform DNA, conferring on it an open structure. The RuvB hexamer acts as an ATP-dependent pump, pulling dsDNA into and through the RuvAB complex. HJ branch migration allows RuvC to scan DNA until it finds its consensus sequence, where it cleaves and resolves the cruciform DNA. In Roseiflexus sp. (strain RS-1), this protein is Holliday junction branch migration complex subunit RuvA.